A 336-amino-acid chain; its full sequence is DNA polymerase beta (336 aa).

K(+) contacts are provided by Lys59, Leu61, and Val64. Na(+)-binding residues include Lys59, Leu61, and Val64. Catalysis depends on Lys71, which acts as the Nucleophile; Schiff-base intermediate with DNA; for 5'-dRP lyase activity. Arg82 is modified (omega-N-methylarginine; by PRMT6). K(+) contacts are provided by Thr100, Val102, and Ile105. The Na(+) site is built by Thr100, Val102, and Ile105. Position 148 (Arg148) interacts with a 2'-deoxyribonucleoside 5'-triphosphate. Arg151 carries the omega-N-methylarginine; by PRMT6 modification. Residues Ser179, Arg182, Gly188, and Asp189 each contribute to the a 2'-deoxyribonucleoside 5'-triphosphate site. The interval 182–191 is DNA-binding; the sequence is RGAESSGDID. Positions 189, 191, and 257 each coordinate Mg(2+).

It belongs to the DNA polymerase type-X family. Mg(2+) is required as a cofactor. Methylation by PRMT6 stimulates the polymerase activity by enhancing DNA binding and processivity. Post-translationally, ubiquitinated: monoubiquitinated by huwe1/arf-bp1. Monoubiquitinated protein is then the target of stub1/chip, which catalyzes polyubiquitination from monoubiquitin, leading to degradation by the proteasome. usp47 mediates the deubiquitination of monoubiquitinated protein, preventing polyubiquitination by STUB1/CHIP and its subsequent degradation.

Its subcellular location is the nucleus. The protein localises to the cytoplasm. It carries out the reaction DNA(n) + a 2'-deoxyribonucleoside 5'-triphosphate = DNA(n+1) + diphosphate. The enzyme catalyses a 5'-end 2'-deoxyribose-2'-deoxyribonucleotide-DNA = (2E,4S)-4-hydroxypenten-2-al-5-phosphate + a 5'-end 5'-phospho-2'-deoxyribonucleoside-DNA + H(+). It catalyses the reaction 2'-deoxyribonucleotide-(2'-deoxyribose 5'-phosphate)-2'-deoxyribonucleotide-DNA = a 3'-end 2'-deoxyribonucleotide-(2,3-dehydro-2,3-deoxyribose 5'-phosphate)-DNA + a 5'-end 5'-phospho-2'-deoxyribonucleoside-DNA + H(+). Functionally, repair polymerase that plays a key role in base-excision repair. During this process, the damaged base is excised by specific DNA glycosylases, the DNA backbone is nicked at the abasic site by an apurinic/apyrimidic (AP) endonuclease, and POLB removes 5'-deoxyribose-phosphate from the preincised AP site acting as a 5'-deoxyribose-phosphate lyase (5'-dRP lyase); through its DNA polymerase activity, it adds one nucleotide to the 3' end of the arising single-nucleotide gap. Conducts 'gap-filling' DNA synthesis in a stepwise distributive fashion rather than in a processive fashion as for other DNA polymerases. It is also able to cleave sugar-phosphate bonds 3' to an intact AP site, acting as an AP lyase. The chain is DNA polymerase beta (polb) from Danio rerio (Zebrafish).